The following is a 428-amino-acid chain: GTPase Obg (428 aa).

An Obg domain is found at 1–158; it reads MFVDKVKVYA…RNLLLELKVL (158 aa). The 171-residue stretch at 159–329 folds into the OBG-type G domain; it reads ADVGLVGFPS…LMLAIADELE (171 aa). Residues 165–172, 190–194, 212–215, 282–285, and 310–312 contribute to the GTP site; these read GFPSVGKS, FTTIT, DLPG, NKMD, and SAI. Ser172 and Thr192 together coordinate Mg(2+). In terms of domain architecture, OCT spans 350 to 428; it reads KHELPIEPFT…IMKFEFEFVE (79 aa).

It belongs to the TRAFAC class OBG-HflX-like GTPase superfamily. OBG GTPase family. As to quaternary structure, monomer. Mg(2+) is required as a cofactor.

The protein localises to the cytoplasm. Its function is as follows. An essential GTPase which binds GTP, GDP and possibly (p)ppGpp with moderate affinity, with high nucleotide exchange rates and a fairly low GTP hydrolysis rate. Plays a role in control of the cell cycle, stress response, ribosome biogenesis and in those bacteria that undergo differentiation, in morphogenesis control. The sequence is that of GTPase Obg from Shouchella clausii (strain KSM-K16) (Alkalihalobacillus clausii).